The primary structure comprises 700 residues: Elongation factor G (700 aa).

Residues 10–286 (NKVRNIGIMA…AVIDYLPNPL (277 aa)) form the tr-type G domain. Residues 19–26 (AHIDAGKT), 83–87 (DTPGH), and 137–140 (NKMD) each bind GTP.

The protein belongs to the TRAFAC class translation factor GTPase superfamily. Classic translation factor GTPase family. EF-G/EF-2 subfamily.

Its subcellular location is the cytoplasm. Catalyzes the GTP-dependent ribosomal translocation step during translation elongation. During this step, the ribosome changes from the pre-translocational (PRE) to the post-translocational (POST) state as the newly formed A-site-bound peptidyl-tRNA and P-site-bound deacylated tRNA move to the P and E sites, respectively. Catalyzes the coordinated movement of the two tRNA molecules, the mRNA and conformational changes in the ribosome. The protein is Elongation factor G of Rhodococcus jostii (strain RHA1).